The chain runs to 397 residues: Putative nickel insertion protein (397 aa).

The protein belongs to the LarC family.

The protein is Putative nickel insertion protein of Synechococcus sp. (strain JA-2-3B'a(2-13)) (Cyanobacteria bacterium Yellowstone B-Prime).